Here is a 158-residue protein sequence, read N- to C-terminus: NADH-quinone oxidoreductase subunit B (158 aa).

Cys37, Cys38, Cys102, and Cys132 together coordinate [4Fe-4S] cluster.

It belongs to the complex I 20 kDa subunit family. In terms of assembly, NDH-1 is composed of 14 different subunits. Subunits NuoB, C, D, E, F, and G constitute the peripheral sector of the complex. [4Fe-4S] cluster is required as a cofactor.

The protein localises to the cell inner membrane. It carries out the reaction a quinone + NADH + 5 H(+)(in) = a quinol + NAD(+) + 4 H(+)(out). Functionally, NDH-1 shuttles electrons from NADH, via FMN and iron-sulfur (Fe-S) centers, to quinones in the respiratory chain. Couples the redox reaction to proton translocation (for every two electrons transferred, four hydrogen ions are translocated across the cytoplasmic membrane), and thus conserves the redox energy in a proton gradient. The protein is NADH-quinone oxidoreductase subunit B of Methylobacillus flagellatus (strain ATCC 51484 / DSM 6875 / VKM B-1610 / KT).